The primary structure comprises 425 residues: MAPPRCPAGLALLLLLLGACGFFQSYAVEVDVKDASNFTCLYAQWMMKFLIKYETNSSDYKNASLDLTSTVTHNGSICGSDTQAALLAVQFGDGHSWSINFTKNNETYRAEFITFTYNTNDTAVFPDARRQGPVTIVVKDAMHPIQLNNVFVCHHTTSLEAENVTQIFWNVTMQPFVQNGTISKKESRCYADTPTAAPTVLPTVANVTTASTTISPAPTTAPKPAENPVTGNYSLKTGNKTCLLATVGLQLNISQDKPLLINIDPKTTHADGTCGNTSATLKLNDGNRTLIDFTFIVNASASVQKFYLREVNVTLLNYQNGSVILSADNNNLSKWDASLGNSYMCRKEQTLEINENLQVHTFNLWVQPFLVKENKFSIAEECFADSDLNFLIPVAVGMALGFLIILVFISYIIGRRKSRTGYQSV.

Residues 1–27 form the signal peptide; it reads MAPPRCPAGLALLLLLLGACGFFQSYA. Residues 28-192 are first lumenal domain; the sequence is VEVDVKDASN…SKKESRCYAD (165 aa). Over 28 to 389 the chain is Lumenal; it reads VEVDVKDASN…EECFADSDLN (362 aa). N-linked (GlcNAc...) asparagine glycans are attached at residues asparagine 37, asparagine 56, asparagine 62, asparagine 74, asparagine 100, asparagine 105, asparagine 120, asparagine 163, asparagine 170, asparagine 179, asparagine 206, asparagine 232, asparagine 239, asparagine 252, asparagine 276, asparagine 287, asparagine 298, asparagine 312, asparagine 320, and asparagine 331. Cysteine 40 and cysteine 78 form a disulfide bridge. Cysteine 153 and cysteine 189 form a disulfide bridge. Residues 193–238 form a hinge region; that stretch reads TPTAAPTVLPTVANVTTASTTISPAPTTAPKPAENPVTGNYSLKTG. Positions 239–390 are second lumenal domain; sequence NKTCLLATVG…ECFADSDLNF (152 aa). A disulfide bridge links cysteine 242 with cysteine 274. Cysteine 345 and cysteine 382 are joined by a disulfide. The chain crosses the membrane as a helical span at residues 390–414; that stretch reads FLIPVAVGMALGFLIILVFISYIIG. Over 415 to 425 the chain is Cytoplasmic; the sequence is RRKSRTGYQSV. An important for binding and subsequent lysosomal degradation of target proteins region spans residues 416–419; it reads RKSR.

The protein belongs to the LAMP family. Monomer. Forms large homooligomers. In terms of processing, extensively N-glycosylated. Contains a minor proportion of O-linked glycans.

Its subcellular location is the lysosome membrane. The protein localises to the endosome membrane. It localises to the cell membrane. It is found in the cytoplasmic vesicle. The protein resides in the autophagosome membrane. Its function is as follows. Lysosomal membrane glycoprotein which plays an important role in lysosome biogenesis, lysosomal pH regulation and autophagy. Plays an important role in chaperone-mediated autophagy, a process that mediates lysosomal degradation of proteins in response to various stresses and as part of the normal turnover of proteins with a long biological half-live. In the chaperone-mediated autophagy, acts downstream of chaperones, such as HSPA8/HSC70, which recognize and bind substrate proteins and mediate their recruitment to lysosomes, where target proteins bind LAMP2. Plays a role in lysosomal protein degradation in response to starvation. Required for the fusion of autophagosomes with lysosomes during autophagy. The chain is Lysosome-associated membrane glycoprotein 2 (LAMP2) from Gallus gallus (Chicken).